A 931-amino-acid polypeptide reads, in one-letter code: Phosphoenolpyruvate carboxylase (931 aa).

Active-site residues include His-138 and Lys-594.

Belongs to the PEPCase type 1 family. It depends on Mg(2+) as a cofactor.

It catalyses the reaction oxaloacetate + phosphate = phosphoenolpyruvate + hydrogencarbonate. Its function is as follows. Forms oxaloacetate, a four-carbon dicarboxylic acid source for the tricarboxylic acid cycle. This chain is Phosphoenolpyruvate carboxylase, found in Streptococcus agalactiae serotype III (strain NEM316).